The sequence spans 37 residues: Large ribosomal subunit protein bL36 (37 aa).

It belongs to the bacterial ribosomal protein bL36 family.

This chain is Large ribosomal subunit protein bL36, found in Clostridium kluyveri (strain NBRC 12016).